Consider the following 153-residue polypeptide: Large ribosomal subunit protein uL30 (153 aa).

This sequence belongs to the universal ribosomal protein uL30 family. In terms of assembly, part of the 50S ribosomal subunit.

The polypeptide is Large ribosomal subunit protein uL30 (Methanosarcina acetivorans (strain ATCC 35395 / DSM 2834 / JCM 12185 / C2A)).